The sequence spans 297 residues: Elongation factor Ts (297 aa).

The involved in Mg(2+) ion dislocation from EF-Tu stretch occupies residues 82 to 85 (TDFV).

It belongs to the EF-Ts family.

Its subcellular location is the cytoplasm. Its function is as follows. Associates with the EF-Tu.GDP complex and induces the exchange of GDP to GTP. It remains bound to the aminoacyl-tRNA.EF-Tu.GTP complex up to the GTP hydrolysis stage on the ribosome. The sequence is that of Elongation factor Ts from Azoarcus sp. (strain BH72).